Here is a 358-residue protein sequence, read N- to C-terminus: Isopentenyl-diphosphate delta-isomerase (358 aa).

A substrate-binding site is contributed by 12–13 (RK). FMN contacts are provided by residues 69 to 71 (AMT), serine 99, and asparagine 128. Glutamine 158 contacts substrate. Glutamate 159 is a binding site for Mg(2+). FMN is bound by residues lysine 190, threonine 220, 267 to 269 (GIR), and 288 to 289 (AG).

Belongs to the IPP isomerase type 2 family. Homooctamer. Dimer of tetramers. FMN is required as a cofactor. Requires NADPH as cofactor. It depends on Mg(2+) as a cofactor.

It localises to the cytoplasm. It catalyses the reaction isopentenyl diphosphate = dimethylallyl diphosphate. Its function is as follows. Involved in the biosynthesis of isoprenoids. Catalyzes the 1,3-allylic rearrangement of the homoallylic substrate isopentenyl (IPP) to its allylic isomer, dimethylallyl diphosphate (DMAPP). This is Isopentenyl-diphosphate delta-isomerase from Listeria innocua serovar 6a (strain ATCC BAA-680 / CLIP 11262).